A 55-amino-acid chain; its full sequence is TGB2 protein (55 aa).

Residues 20-39 (NAAFAVVLLLSLLIYGSRCL) form a helical membrane-spanning segment.

It belongs to the carlavirus/potexvirus TGB2 protein family.

The protein resides in the host membrane. In terms of biological role, the three proteins TGB1, TGB2 and TGB3 are required for virus movement. This is TGB2 protein from Potato virus X (strain Xc) (PVX).